The primary structure comprises 2383 residues: Highly reducing polyketide synthase SAT13 (2383 aa).

The Ketosynthase family 3 (KS3) domain maps to 6 to 433; the sequence is PVPLAIVGIA…GTNAHAVLER (428 aa). Residues cysteine 180, histidine 315, and histidine 355 each act as for beta-ketoacyl synthase activity in the active site. The malonyl-CoA:ACP transacylase (MAT) domain stretch occupies residues 536-828; the sequence is FIFTGQGAQW…IGPHSALAGP (293 aa). Serine 626 serves as the catalytic For malonyltransferase activity. Positions 922-1062 are N-terminal hotdog fold; that stretch reads HDLLGLRMTE…GNIVVVFKTS (141 aa). The segment at 922–1239 is dehydratase (DH) domain; the sequence is HDLLGLRMTE…GMELRSFVAR (318 aa). One can recognise a PKS/mFAS DH domain in the interval 922 to 1242; the sequence is HDLLGLRMTE…LRSFVARDSN (321 aa). The active-site Proton acceptor; for dehydratase activity is histidine 954. Residues 1087–1242 form a C-terminal hotdog fold region; that stretch reads GKLTHAGQLY…LRSFVARDSN (156 aa). The active-site Proton donor; for dehydratase activity is the aspartate 1152. Residues 1669-1977 are enoylreductase (ER) domain; that stretch reads DGQNRLVFVE…KQGSMKKCVL (309 aa). Positions 2001-2184 are catalytic ketoreductase (KRc) domain; it reads ATYVVAGGLG…MSLNIGGIKD (184 aa). The Carrier domain maps to 2287–2364; that stretch reads EISEFVARSI…DLAQKVVSRS (78 aa). Position 2324 is an O-(pantetheine 4'-phosphoryl)serine (serine 2324).

It functions in the pathway mycotoxin biosynthesis. Its function is as follows. Highly reducing polyketide synthase; part of the satratoxin SC2 cluster involved in the biosynthesis of satratoxins, trichothecene mycotoxins that are associated with human food poisonings. Satratoxins are suggested to be made by products of multiple gene clusters (SC1, SC2 and SC3) that encode 21 proteins in all, including polyketide synthases, acetyltransferases, and other enzymes expected to modify the trichothecene skeleton. SC1 encodes 10 proteins, SAT1 to SAT10. The largest are SAT8, which encodes a putative polyketide synthase (PKS) with a conventional non-reducing architecture, and SAT10, a putative protein containing four ankyrin repeats and thus may be involved in protein scaffolding. The putative short-chain reductase SAT3 may assist the PKS in some capacity. SAT6 contains a secretory lipase domain and acts probably as a trichothecene esterase. SAT5 encodes a putative acetyltransferase, and so, with SAT6, may affect endogenous protection from toxicity. The probable transcription factor SAT9 may regulate the expression of the SC1 cluster. SC2 encodes proteins SAT11 to SAT16, the largest of which encodes the putative reducing PKS SAT13. SAT11 is a cytochrome P450 monooxygenase, while SAT14 and SAT16 are probable acetyltransferases. The SC2 cluster may be regulated by the transcription factor SAT15. SC3 is a small cluster that encodes 5 proteins, SAT17 to SAT21. SAT21 is a putative MFS-type transporter which may have a role in exporting secondary metabolites. The four other proteins putatively encoded in SC3 include the taurine hydroxylase-like protein SAT17, the O-methyltransferase SAT18, the acetyltransferase SAT19, and the Cys6-type zinc finger SAT20, the latter being probably involved in regulation of SC3 expression. The sequence is that of Highly reducing polyketide synthase SAT13 from Stachybotrys chartarum (strain CBS 109288 / IBT 7711) (Toxic black mold).